A 335-amino-acid polypeptide reads, in one-letter code: Large ribosomal subunit protein uL3 (335 aa).

It belongs to the universal ribosomal protein uL3 family. Part of the 50S ribosomal subunit. Forms a cluster with proteins L14 and L24e.

Its function is as follows. One of the primary rRNA binding proteins, it binds directly near the 3'-end of the 23S rRNA, where it nucleates assembly of the 50S subunit. The polypeptide is Large ribosomal subunit protein uL3 (Methanocaldococcus jannaschii (strain ATCC 43067 / DSM 2661 / JAL-1 / JCM 10045 / NBRC 100440) (Methanococcus jannaschii)).